Reading from the N-terminus, the 126-residue chain is SH2 domain-containing protein 1A (126 aa).

In terms of domain architecture, SH2 spans 6-104 (VYHGKISRET…VTPLQYPVEK (99 aa)). The segment at 67–92 (ETAPGVHKRFFRKVKNLISAFQKPDQ) is interaction with FYN SH3 domain. K89 is modified (N6-acetyllysine). The segment at 100-126 (YPVEKSSGRGPQAPTGRRDSDICLNAP) is disordered.

As to quaternary structure, interacts with CD84, CD244, LY9, SLAMF1 and FYN. Interacts with NTRK1, NTRK2 and NTRK3. T-cells.

Its subcellular location is the cytoplasm. Cytoplasmic adapter regulating receptors of the signaling lymphocytic activation molecule (SLAM) family such as SLAMF1, CD244, LY9, CD84, SLAMF6 and SLAMF7. In SLAM signaling seems to cooperate with SH2D1B/EAT-2. Initially it has been proposed that association with SLAMF1 prevents SLAMF1 binding to inhibitory effectors including INPP5D/SHIP1 and PTPN11/SHP-2. However, by simultaneous interactions, recruits FYN which subsequently phosphorylates and activates SLAMF1. Positively regulates CD244/2B4- and CD84-mediated natural killer (NK) cell functions. Can also promote CD48-, SLAMF6 -, LY9-, and SLAMF7-mediated NK cell activation. In the context of NK cell-mediated cytotoxicity enhances conjugate formation with target cells. May also regulate the activity of the neurotrophin receptors NTRK1, NTRK2 and NTRK3. In Mus musculus (Mouse), this protein is SH2 domain-containing protein 1A (Sh2d1a).